Here is a 404-residue protein sequence, read N- to C-terminus: Argininosuccinate synthase (404 aa).

7-15 (AYSGGLDTS) lines the ATP pocket. Residues Y85 and S90 each coordinate L-citrulline. G115 is a binding site for ATP. L-aspartate contacts are provided by T117, N121, and D122. Residue N121 participates in L-citrulline binding. Positions 125, 178, 187, 264, and 276 each coordinate L-citrulline.

The protein belongs to the argininosuccinate synthase family. Type 1 subfamily. In terms of assembly, homotetramer.

It localises to the cytoplasm. It carries out the reaction L-citrulline + L-aspartate + ATP = 2-(N(omega)-L-arginino)succinate + AMP + diphosphate + H(+). The protein operates within amino-acid biosynthesis; L-arginine biosynthesis; L-arginine from L-ornithine and carbamoyl phosphate: step 2/3. In Rhodopirellula baltica (strain DSM 10527 / NCIMB 13988 / SH1), this protein is Argininosuccinate synthase.